A 108-amino-acid polypeptide reads, in one-letter code: MSRAPISRTFTEGRLAQVLVAPIISEKATSIGEKHNQVLFKVLQDATKIEIKAAVELMFKVEVESVQVLNQKGKTKRFGGRTGRRDHLRKAYVSLKAGQELNFSGEAA.

Belongs to the universal ribosomal protein uL23 family. As to quaternary structure, part of the 50S ribosomal subunit. Contacts protein L29, and trigger factor when it is bound to the ribosome.

Its function is as follows. One of the early assembly proteins it binds 23S rRNA. One of the proteins that surrounds the polypeptide exit tunnel on the outside of the ribosome. Forms the main docking site for trigger factor binding to the ribosome. In Leptothrix cholodnii (strain ATCC 51168 / LMG 8142 / SP-6) (Leptothrix discophora (strain SP-6)), this protein is Large ribosomal subunit protein uL23.